The following is a 328-amino-acid chain: Phosphate acetyltransferase (328 aa).

Belongs to the phosphate acetyltransferase and butyryltransferase family.

It is found in the cytoplasm. It carries out the reaction acetyl-CoA + phosphate = acetyl phosphate + CoA. It functions in the pathway metabolic intermediate biosynthesis; acetyl-CoA biosynthesis; acetyl-CoA from acetate: step 2/2. This Staphylococcus aureus (strain MRSA252) protein is Phosphate acetyltransferase (pta).